Reading from the N-terminus, the 320-residue chain is Methionyl-tRNA formyltransferase (320 aa).

117–120 contacts (6S)-5,6,7,8-tetrahydrofolate; sequence SLLP.

This sequence belongs to the Fmt family.

It carries out the reaction L-methionyl-tRNA(fMet) + (6R)-10-formyltetrahydrofolate = N-formyl-L-methionyl-tRNA(fMet) + (6S)-5,6,7,8-tetrahydrofolate + H(+). Its function is as follows. Attaches a formyl group to the free amino group of methionyl-tRNA(fMet). The formyl group appears to play a dual role in the initiator identity of N-formylmethionyl-tRNA by promoting its recognition by IF2 and preventing the misappropriation of this tRNA by the elongation apparatus. The protein is Methionyl-tRNA formyltransferase of Bordetella petrii (strain ATCC BAA-461 / DSM 12804 / CCUG 43448).